A 256-amino-acid polypeptide reads, in one-letter code: uncharacterized protein (256 aa).

This is an uncharacterized protein from Treponema pallidum (strain Nichols).